Here is a 532-residue protein sequence, read N- to C-terminus: UDP-glucuronosyltransferase 1A6 (532 aa).

Residues 1–26 form the signal peptide; it reads MACLLRSFQRISAGVFFLALWGMVVG. N-linked (GlcNAc...) asparagine glycans are attached at residues Asn-294 and Asn-346. Residues 490-506 traverse the membrane as a helical segment; that stretch reads VIGFLLAVVLTVAFITF.

This sequence belongs to the UDP-glycosyltransferase family. In terms of assembly, isoform 1 interacts with isoform 3/i2 suggesting that oligomerization is involved in negative regulation of transferase activity by isoform 3. Isoform 1 also interacts with respective i2 isoforms of UGT1A1, UGT1A3, UGT1A4, UGT1A7, UGT1A8, UGT1A9 and UGT1A10. In terms of tissue distribution, expressed in skin. Isoforms 1 and 3 are expressed in kidney and liver. Isoform 1 but not isoform 2 is expressed in colon, esophagus and small intestine.

It localises to the microsome. The protein resides in the endoplasmic reticulum membrane. The enzyme catalyses glucuronate acceptor + UDP-alpha-D-glucuronate = acceptor beta-D-glucuronoside + UDP + H(+). It catalyses the reaction (5Z,8Z,11Z,14Z)-eicosatetraenoate + UDP-alpha-D-glucuronate = O-[(5Z),(8Z),(11Z),(14Z)-eicosatetraenoyl]-beta-D-glucuronate + UDP. The catalysed reaction is 15-hydroxy-(5Z,8Z,11Z,13E)-eicosatetraenoate + UDP-alpha-D-glucuronate = 15-O-(beta-D-glucuronosyl)-(5Z,8Z,11Z,14Z)-eicosatetraenoate + UDP + H(+). It carries out the reaction (E)-ferulate + UDP-alpha-D-glucuronate = (E)-4-O-(beta-D-glucuronosyl)-ferulate + UDP + H(+). The enzyme catalyses (E)-ferulate + UDP-alpha-D-glucuronate = (E)-ferulic acid beta-D-glucuronate ester + UDP. Its function is as follows. UDP-glucuronosyltransferase (UGT) that catalyzes phase II biotransformation reactions in which lipophilic substrates are conjugated with glucuronic acid to facilitate their inactivation and excretion from the body. Essential for the elimination and detoxification of drugs, xenobiotics and endogenous compounds. Involved in the glucuronidation of arachidonic acid (AA) and AA-derived eicosanoids including 15-HETE and 20-HETE. Conjugates small planar phenolic molecules such as 4-nitrophenol, 1-naphthol, and 4-methylumbelliferone. The bulky phenol 4-hydroxybiphenyl, androgens and estrogens are not substrates. 2-hydroxybiphenyl is an excellent substrate. Involved in the glucuronidation of the phytochemical ferulic acid at the phenolic or the carboxylic acid group. Functionally, isoform 3 lacks transferase activity but acts as a negative regulator of isoform 1. This Homo sapiens (Human) protein is UDP-glucuronosyltransferase 1A6.